Consider the following 309-residue polypeptide: Taste receptor type 2 member 124 (309 aa).

Residues 1 to 7 (MVSVLHS) lie on the Extracellular side of the membrane. Residues 8 to 28 (ISTIIIIAEFVWGNLSNGLIV) traverse the membrane as a helical segment. The Cytoplasmic segment spans residues 29–46 (LKNCLDWINIKELSTLDQ). A helical membrane pass occupies residues 47-67 (ILILLAISRISLIWETLLMWV). The Extracellular portion of the chain corresponds to 68 to 81 (KDKLISSITIEELK). The chain crosses the membrane as a helical span at residues 82-102 (MIMFSFMLSSHFSLWLATALS). The Cytoplasmic portion of the chain corresponds to 103-127 (TFYLFRIANCSWQIFLYLKWRLKHL). A helical transmembrane segment spans residues 128–148 (IVQMLLGSVMFLIANIIQITI). At 149–182 (TLEKRFYQYKGNTSVNSIQNEFALLIEMMLFNMT) the chain is on the extracellular side. N-linked (GlcNAc...) asparagine glycosylation is found at asparagine 160 and asparagine 180. A helical membrane pass occupies residues 183-203 (IFSVIPFLLALISFFLLIFSL). At 204–227 (WKHLQRMQLNSREDRDPSTKAHRN) the chain is on the cytoplasmic side. A helical transmembrane segment spans residues 228–248 (ALGIMVSFLLLYTMYVLSLLI). The Extracellular segment spans residues 249-261 (SWIAQKNQSELVH). The N-linked (GlcNAc...) asparagine glycan is linked to asparagine 255. A helical transmembrane segment spans residues 262-282 (IICMITSLLNPSVHSSILILG). The Cytoplasmic portion of the chain corresponds to 283 to 309 (NFKLKQSSLCILRHLGCRLKSQNTPTT).

Belongs to the G-protein coupled receptor T2R family.

The protein localises to the membrane. In terms of biological role, putative taste receptor which may play a role in the perception of bitterness. This is Taste receptor type 2 member 124 from Rattus norvegicus (Rat).